Consider the following 456-residue polypeptide: Bifunctional protein GlmU (456 aa).

Positions 1-229 (MLNVVILAAG…GWETLGVNSR (229 aa)) are pyrophosphorylase. UDP-N-acetyl-alpha-D-glucosamine-binding positions include 7–10 (LAAG), K21, Q73, 78–79 (GT), 103–105 (YGD), G139, E154, N169, and N227. D105 serves as a coordination point for Mg(2+). Position 227 (N227) interacts with Mg(2+). Residues 230–250 (VQQAELERRWQQEQARRQLEA) are linker. The tract at residues 251–456 (GVTLADPARF…EGWQRPQKKS (206 aa)) is N-acetyltransferase. Residues R333 and K351 each coordinate UDP-N-acetyl-alpha-D-glucosamine. Residue H363 is the Proton acceptor of the active site. The UDP-N-acetyl-alpha-D-glucosamine site is built by Y366 and N377. Acetyl-CoA is bound by residues A380, 386 to 387 (NY), S405, A423, and R440.

In the N-terminal section; belongs to the N-acetylglucosamine-1-phosphate uridyltransferase family. The protein in the C-terminal section; belongs to the transferase hexapeptide repeat family. In terms of assembly, homotrimer. It depends on Mg(2+) as a cofactor.

The protein resides in the cytoplasm. The catalysed reaction is alpha-D-glucosamine 1-phosphate + acetyl-CoA = N-acetyl-alpha-D-glucosamine 1-phosphate + CoA + H(+). The enzyme catalyses N-acetyl-alpha-D-glucosamine 1-phosphate + UTP + H(+) = UDP-N-acetyl-alpha-D-glucosamine + diphosphate. It participates in nucleotide-sugar biosynthesis; UDP-N-acetyl-alpha-D-glucosamine biosynthesis; N-acetyl-alpha-D-glucosamine 1-phosphate from alpha-D-glucosamine 6-phosphate (route II): step 2/2. The protein operates within nucleotide-sugar biosynthesis; UDP-N-acetyl-alpha-D-glucosamine biosynthesis; UDP-N-acetyl-alpha-D-glucosamine from N-acetyl-alpha-D-glucosamine 1-phosphate: step 1/1. It functions in the pathway bacterial outer membrane biogenesis; LPS lipid A biosynthesis. In terms of biological role, catalyzes the last two sequential reactions in the de novo biosynthetic pathway for UDP-N-acetylglucosamine (UDP-GlcNAc). The C-terminal domain catalyzes the transfer of acetyl group from acetyl coenzyme A to glucosamine-1-phosphate (GlcN-1-P) to produce N-acetylglucosamine-1-phosphate (GlcNAc-1-P), which is converted into UDP-GlcNAc by the transfer of uridine 5-monophosphate (from uridine 5-triphosphate), a reaction catalyzed by the N-terminal domain. The chain is Bifunctional protein GlmU from Bordetella petrii (strain ATCC BAA-461 / DSM 12804 / CCUG 43448).